Reading from the N-terminus, the 322-residue chain is Adenine deaminase (322 aa).

His11, His13, and His189 together coordinate Zn(2+). Glu192 functions as the Proton donor in the catalytic mechanism. A Zn(2+)-binding site is contributed by Asp270. Asp271 contributes to the substrate binding site.

Belongs to the metallo-dependent hydrolases superfamily. Adenosine and AMP deaminases family. Adenine deaminase type 2 subfamily. Requires Zn(2+) as cofactor.

The catalysed reaction is adenine + H2O + H(+) = hypoxanthine + NH4(+). Functionally, catalyzes the hydrolytic deamination of adenine to hypoxanthine. Plays an important role in the purine salvage pathway and in nitrogen catabolism. The sequence is that of Adenine deaminase from Rhizobium rhizogenes (strain K84 / ATCC BAA-868) (Agrobacterium radiobacter).